The chain runs to 190 residues: Adenine phosphoribosyltransferase (190 aa).

The protein belongs to the purine/pyrimidine phosphoribosyltransferase family. In terms of assembly, homodimer.

It localises to the cytoplasm. It carries out the reaction AMP + diphosphate = 5-phospho-alpha-D-ribose 1-diphosphate + adenine. The protein operates within purine metabolism; AMP biosynthesis via salvage pathway; AMP from adenine: step 1/1. In terms of biological role, catalyzes a salvage reaction resulting in the formation of AMP, that is energically less costly than de novo synthesis. In Treponema denticola (strain ATCC 35405 / DSM 14222 / CIP 103919 / JCM 8153 / KCTC 15104), this protein is Adenine phosphoribosyltransferase.